The primary structure comprises 289 residues: Oxaloacetate decarboxylase (289 aa).

Residue S50 coordinates substrate. D88 is a Mg(2+) binding site. The substrate site is built by R159 and H235.

It belongs to the isocitrate lyase/PEP mutase superfamily. Oxaloacetate decarboxylase family. As to quaternary structure, homotetramer; dimer of dimers. It depends on Mg(2+) as a cofactor.

The catalysed reaction is oxaloacetate + H(+) = pyruvate + CO2. In terms of biological role, catalyzes the decarboxylation of oxaloacetate into pyruvate. Seems to play a role in maintaining cellular concentrations of bicarbonate and pyruvate. The polypeptide is Oxaloacetate decarboxylase (Pseudomonas fluorescens (strain ATCC BAA-477 / NRRL B-23932 / Pf-5)).